Reading from the N-terminus, the 311-residue chain is Probable inactive peptidyl-prolyl cis-trans isomerase-like 6 (311 aa).

The 164-residue stretch at 145-308 folds into the PPIase cyclophilin-type domain; the sequence is FLDICIDSSP…HMCRITDSGD (164 aa).

The protein belongs to the cyclophilin-type PPIase family.

Functionally, probable inactive PPIase with no peptidyl-prolyl cis-trans isomerase activity. In Homo sapiens (Human), this protein is Probable inactive peptidyl-prolyl cis-trans isomerase-like 6.